The following is a 325-amino-acid chain: GMP reductase (325 aa).

The active-site Thioimidate intermediate is cysteine 174. 203 to 226 is a binding site for NADP(+); it reads IIADGGLRTHGDIAKSIRFGATMV.

Belongs to the IMPDH/GMPR family. GuaC type 2 subfamily.

The enzyme catalyses IMP + NH4(+) + NADP(+) = GMP + NADPH + 2 H(+). Catalyzes the irreversible NADPH-dependent deamination of GMP to IMP. It functions in the conversion of nucleobase, nucleoside and nucleotide derivatives of G to A nucleotides, and in maintaining the intracellular balance of A and G nucleotides. This Staphylococcus epidermidis (strain ATCC 35984 / DSM 28319 / BCRC 17069 / CCUG 31568 / BM 3577 / RP62A) protein is GMP reductase.